The following is a 500-amino-acid chain: MNYFPWLTIIVVFPISAGSLMLFLPYRGNKVNKWYTICICILELLITTYAFCYNFKMDDPLIQLSEDYKWINFLDFYWRLGIDGLSIGTILLTGFITTLATLAAFPVTRDSRLFHFLMLAMYSGQIGSFSSRDLLLFFIMWELELIPVYLLLSMWGGKKRLYSATKFILYTAGSSIFLLIGVLGISLYGSNEPTLNLELLANQSYPVTLEIILYIGFLIAFAVKSPLIPLHTWLPDTHGEAHYSTCMLLAGILLKMGAYGLVRINMELLPHAHSLFSPWLMVVGTIQIIYAASTSPGQRNLKKRIAYSSVSHMGFIIIGIASITDPGLNGAILQIISHGFIGAALFFLAGTSYDRIRLVSLDEMGGMAISIPKIFTMFTILSMASLALPGMSGFVAEFIVFFGIITSQKYLLMAKIFIIVVMAIGMILTPIYLLSMSRQMFYGYKLINVQNFSFFDSGPRELFLSISSLLPIIGMGIYPDFVLSLASNKVESILSNYFYG.

The next 14 helical transmembrane spans lie at 4–24, 35–55, 87–107, 113–130, 134–154, 167–187, 211–231, 242–262, 272–292, 305–325, 330–350, 386–406, 416–436, and 462–482; these read FPWL…MLFL, YTIC…CYNF, IGTI…AFPV, LFHF…GSFS, LLLF…LLSM, FILY…GISL, IILY…IPLH, HYST…YGLV, AHSL…IYAA, IAYS…SITD, GAIL…FLAG, LALP…GIIT, IFII…LLSM, and LFLS…PDFV.

This sequence belongs to the complex I subunit 4 family.

It localises to the plastid. It is found in the chloroplast thylakoid membrane. It carries out the reaction a plastoquinone + NADH + (n+1) H(+)(in) = a plastoquinol + NAD(+) + n H(+)(out). It catalyses the reaction a plastoquinone + NADPH + (n+1) H(+)(in) = a plastoquinol + NADP(+) + n H(+)(out). In Aethionema cordifolium (Lebanon stonecress), this protein is NAD(P)H-quinone oxidoreductase chain 4, chloroplastic.